The following is a 317-amino-acid chain: tRNA dimethylallyltransferase (317 aa).

14–21 is an ATP binding site; the sequence is GPTASGKT. Residue 16–21 coordinates substrate; the sequence is TASGKT. 2 interaction with substrate tRNA regions span residues 39–42 and 163–167; these read DSAL and QRIQR.

It belongs to the IPP transferase family. As to quaternary structure, monomer. The cofactor is Mg(2+).

The enzyme catalyses adenosine(37) in tRNA + dimethylallyl diphosphate = N(6)-dimethylallyladenosine(37) in tRNA + diphosphate. Functionally, catalyzes the transfer of a dimethylallyl group onto the adenine at position 37 in tRNAs that read codons beginning with uridine, leading to the formation of N6-(dimethylallyl)adenosine (i(6)A). The protein is tRNA dimethylallyltransferase of Stenotrophomonas maltophilia (strain R551-3).